We begin with the raw amino-acid sequence, 391 residues long: MEKAIRNFLSQESAGGILLMAAVILAMIMANSPLSGLYQGFLHTEMQVRVGSLDIDKTLIHWINDGLMALFFMLIGLEVKRELLEGALSSREQASLPTFAAIGGMIFPAAIYLIFNYADPITQVGWAIPAATDIAFALGIMALLGSRVPVALKVFLLALAIIDDLGVVVIIAMFYSTDLSAISLVVAALAIVILVGLNRKGVTALAPYGVVGLILWIAVLKSGVHATLAGVIIAFCIPLRAKDGSSPSEHLEHSLHPWSTFVILPIFAFANAGVDLSGMSLGDLLSPVPVGIALGLLLGKPLGVLLFSFVAVKLKLAALPEGMGWRHIAPVAVMCGIGFTMSMFISSLAFIGDGEAYGDLARLGILTGSIMSAVIGYFWLSKVLPEKGEKS.

11 consecutive transmembrane segments (helical) span residues 14–34 (AGGI…NSPL), 59–79 (LIHW…GLEV), 95–115 (SLPT…YLIF), 124–144 (VGWA…MALL), 154–174 (VFLL…IAMF), 177–197 (TDLS…LVGL), 213–233 (LILW…GVII), 261–281 (FVIL…GMSL), 292–312 (IALG…FVAV), 331–351 (VAVM…LAFI), and 363–383 (LGIL…LSKV).

It belongs to the NhaA Na(+)/H(+) (TC 2.A.33) antiporter family.

It is found in the cell inner membrane. The enzyme catalyses Na(+)(in) + 2 H(+)(out) = Na(+)(out) + 2 H(+)(in). Na(+)/H(+) antiporter that extrudes sodium in exchange for external protons. The polypeptide is Na(+)/H(+) antiporter NhaA (Shewanella loihica (strain ATCC BAA-1088 / PV-4)).